We begin with the raw amino-acid sequence, 448 residues long: Glucose-6-phosphate isomerase (448 aa).

Catalysis depends on Glu290, which acts as the Proton donor. Active-site residues include His311 and Lys425.

Belongs to the GPI family.

The protein resides in the cytoplasm. The enzyme catalyses alpha-D-glucose 6-phosphate = beta-D-fructose 6-phosphate. It participates in carbohydrate biosynthesis; gluconeogenesis. Its pathway is carbohydrate degradation; glycolysis; D-glyceraldehyde 3-phosphate and glycerone phosphate from D-glucose: step 2/4. Functionally, catalyzes the reversible isomerization of glucose-6-phosphate to fructose-6-phosphate. In Levilactobacillus brevis (strain ATCC 367 / BCRC 12310 / CIP 105137 / JCM 1170 / LMG 11437 / NCIMB 947 / NCTC 947) (Lactobacillus brevis), this protein is Glucose-6-phosphate isomerase.